The primary structure comprises 523 residues: 2-isopropylmalate synthase (523 aa).

The 263-residue stretch at 5–267 folds into the Pyruvate carboxyltransferase domain; it reads VIIFDTTLRD…HTNINHHEIW (263 aa). Positions 14, 202, 204, and 238 each coordinate Mn(2+). The regulatory domain stretch occupies residues 392–523; that stretch reads RLDYFSVQSG…QNKENNKETV (132 aa).

This sequence belongs to the alpha-IPM synthase/homocitrate synthase family. LeuA type 1 subfamily. In terms of assembly, homodimer. Requires Mn(2+) as cofactor.

The protein resides in the cytoplasm. It catalyses the reaction 3-methyl-2-oxobutanoate + acetyl-CoA + H2O = (2S)-2-isopropylmalate + CoA + H(+). The protein operates within amino-acid biosynthesis; L-leucine biosynthesis; L-leucine from 3-methyl-2-oxobutanoate: step 1/4. In terms of biological role, catalyzes the condensation of the acetyl group of acetyl-CoA with 3-methyl-2-oxobutanoate (2-ketoisovalerate) to form 3-carboxy-3-hydroxy-4-methylpentanoate (2-isopropylmalate). In Klebsiella pneumoniae (strain 342), this protein is 2-isopropylmalate synthase.